The chain runs to 360 residues: DNA replication and repair protein RecF (360 aa).

Position 33 to 40 (33 to 40 (GENGSGKT)) interacts with ATP.

The protein belongs to the RecF family.

The protein localises to the cytoplasm. Functionally, the RecF protein is involved in DNA metabolism; it is required for DNA replication and normal SOS inducibility. RecF binds preferentially to single-stranded, linear DNA. It also seems to bind ATP. The protein is DNA replication and repair protein RecF of Rickettsia akari (strain Hartford).